A 245-amino-acid chain; its full sequence is MSQVNMRDMLKAGVHFGHQTRYWNPKMGKYIFGARNKIHIVNLEKTLPMFNDALSFVERLAQGKNKILFVGTKRSAGKIVAEQAARCGSPYVDHRWLGGMLTNYKTIRASIKRLRDLETQAEDGTFAKLTKKEALMRSRDLEKLDRSLGGIKDMGGLPDALFVIDVDHERIAITEANKLGIPVIGVVDTNSSPEGVDYIIPGNDDAIRAIELYMTSMADAVIRGRNNVAGGTEVYAEEAAAPAAE.

Belongs to the universal ribosomal protein uS2 family.

The sequence is that of Small ribosomal subunit protein uS2 from Pseudomonas putida (strain ATCC 47054 / DSM 6125 / CFBP 8728 / NCIMB 11950 / KT2440).